Consider the following 318-residue polypeptide: Ribosomal RNA small subunit methyltransferase H (318 aa).

Residues 34-36, Asp53, Phe82, Asp103, and Gln110 each bind S-adenosyl-L-methionine; that span reads GGH.

It belongs to the methyltransferase superfamily. RsmH family.

Its subcellular location is the cytoplasm. It carries out the reaction cytidine(1402) in 16S rRNA + S-adenosyl-L-methionine = N(4)-methylcytidine(1402) in 16S rRNA + S-adenosyl-L-homocysteine + H(+). In terms of biological role, specifically methylates the N4 position of cytidine in position 1402 (C1402) of 16S rRNA. The protein is Ribosomal RNA small subunit methyltransferase H of Limosilactobacillus reuteri (strain DSM 20016) (Lactobacillus reuteri).